Consider the following 963-residue polypeptide: Seizure 6-like protein (963 aa).

The first 31 residues, 1-31 (MPVARPQAAGPDRISLFLVAFLLGSPAAAQA), serve as a signal peptide directing secretion. Disordered stretches follow at residues 28 to 63 (AAQAEDGGPEGEMHPSTAYLLPSASLESSLEEGVTS), 116 to 150 (RPLATPTTLQRLGSPASATTKLREPEDPEQPTAPA), and 164 to 204 (LPHS…TTTS). Residues 32 to 897 (EDGGPEGEMH…ESSLEGGNMA (866 aa)) are Extracellular-facing. Low complexity predominate over residues 47–59 (LLPSASLESSLEE). Polar residues predominate over residues 120–135 (TPTTLQRLGSPASATT). The span at 191–204 (TGSASEESQETTTS) shows a compositional bias: low complexity. C221 and C248 are joined by a disulfide. Residues 221–329 (CGVSFSDPEG…GTFQLHYQAF (109 aa)) enclose the CUB 1 domain. Residues N251, N268, and N290 are each glycosylated (N-linked (GlcNAc...) asparagine). The Sushi 1 domain maps to 331–390 (LSCPFPRRPDAGEVTVMDLHSGGVAHFHCHLGYELQGAKTLTCINASKPHWSSQEPVCSA). Cystine bridges form between C333-C373, C359-C388, and C392-C419. N-linked (GlcNAc...) asparagine glycans are attached at residues N375, N398, N414, N454, N516, and N558. The region spanning 392-502 (CGGAVHNATI…SAFNIRFEAF (111 aa)) is the CUB 2 domain. Residues 505-566 (GHCYEPYIQN…WNDTEPLCRA (62 aa)) enclose the Sushi 2 domain. Cystine bridges form between C507/C549, C534/C564, and C568/C594. The 112-residue stretch at 568–679 (CGGELSAVAG…QGFIMNYIEV (112 aa)) folds into the CUB 3 domain. N-linked (GlcNAc...) asparagine glycosylation is found at N614 and N682. 3 consecutive Sushi domains span residues 683 to 742 (DSCS…FCEK), 744 to 807 (MYCT…HCVS), and 811 to 872 (LACD…ICKV). 6 disulfide bridges follow: C685-C727, C713-C740, C746-C788, C774-C805, C813-C855, and C841-C870. A helical transmembrane segment spans residues 898–918 (LAIFIPVLLISLLLGGAYIYV). Over 919 to 963 (TRCRQYSSLRLPLMYSHPYSQITVETEFDNPIYETGETREYEVSI) the chain is Cytoplasmic.

Belongs to the SEZ6 family. Expressed exclusively in the brain, predominantly in neurons. Wide expression in the gray matter of the brain with high levels in the olfactory bulb, anterior olfactory nuclei, hippocampal formation and cerebellar cortex. Detected diffusely and weakly in the white matter, such as the corpus callosum and cerebellar medulla. In the cerebellar cortex, intensely expressed in Purkinje cells and granule cells. Detected also in interneurons in the molecular layer.

The protein resides in the cell membrane. The protein localises to the endoplasmic reticulum membrane. Candidate tumor suppressor gene. May contribute to specialized endoplasmic reticulum functions in neurons. In Mus musculus (Mouse), this protein is Seizure 6-like protein (Sez6l).